A 480-amino-acid chain; its full sequence is Adenosylhomocysteinase (480 aa).

The substrate site is built by Thr-63, Asp-142, and Glu-203. Residue 204 to 206 (TTT) coordinates NAD(+). Residues Lys-233 and Asp-237 each coordinate substrate. Residues Asn-238, 267-272 (GYGDVG), Glu-290, Asn-325, 346-348 (IGH), and Asn-394 each bind NAD(+).

This sequence belongs to the adenosylhomocysteinase family. The cofactor is NAD(+).

Its subcellular location is the cytoplasm. The catalysed reaction is S-adenosyl-L-homocysteine + H2O = L-homocysteine + adenosine. Its pathway is amino-acid biosynthesis; L-homocysteine biosynthesis; L-homocysteine from S-adenosyl-L-homocysteine: step 1/1. Its function is as follows. May play a key role in the regulation of the intracellular concentration of adenosylhomocysteine. This chain is Adenosylhomocysteinase, found in Xanthomonas axonopodis pv. citri (strain 306).